The following is a 517-amino-acid chain: MAFRKSNVYLSLVNSYIIDSPQPSSINYWWNMGSLLGLCLVIQIVTGIFMAMHYSSNIELAFSSVEHIMRDVHNGYILRYLHANGASFFFMVMFMHMAKGLYYGSYRSPRVTLWNVGVIIFILTIATAFLGYCCVYGQMSHWGATVITNLFSAIPFVGNDIVSWLWGGFNMEDPYYSNMMLNKSVLCWNIFIWMMNYYIIQLIIYNNMIWNKNNMVKMFIMRRKLAVINMYMYMKLIIQRTYSYYMNNTIIYDKNHKLNTDNPIYAYIGGLFEGDGWITISKKGKYLLYELGIEMHIRDIQLLYKIKNILGIGKVTIKKLKMKDGTIKEMCKFNVRNKNHLKNIIIPIFDKYPMLTNKHYDYLYFKDNLLKDIKYYNDLSYYLRPIKPFNTTEDILNKNYFSSWLIGFFEAESCFSIYKPMNKKMKTASFEVSQNNSMEVMLAIKSYLKITQNIYTDKFNNSRMTTKSINGIKNVVMFINNNPIKLLGYKKLQYLLFLKDLRTITKYNNYFKIPPKY.

The Mitochondrial matrix portion of the chain corresponds to 1–31 (MAFRKSNVYLSLVNSYIIDSPQPSSINYWWN). The interval 1 to 169 (MAFRKSNVYL…DIVSWLWGGF (169 aa)) is cytochrome b. Residues 32–52 (MGSLLGLCLVIQIVTGIFMAM) traverse the membrane as a helical segment. Residues 53-84 (HYSSNIELAFSSVEHIMRDVHNGYILRYLHAN) lie on the Mitochondrial intermembrane side of the membrane. A helical transmembrane segment spans residues 85 to 105 (GASFFFMVMFMHMAKGLYYGS). Residues 106–115 (YRSPRVTLWN) lie on the Mitochondrial matrix side of the membrane. Residues 116-136 (VGVIIFILTIATAFLGYCCVY) traverse the membrane as a helical segment. Residues 137–145 (GQMSHWGAT) lie on the Mitochondrial intermembrane side of the membrane. Residues 146-166 (VITNLFSAIPFVGNDIVSWLW) form a helical membrane-spanning segment. Residues 167–184 (GGFNMEDPYYSNMMLNKS) lie on the Mitochondrial matrix side of the membrane. The maturase stretch occupies residues 170-517 (NMEDPYYSNM…NNYFKIPPKY (348 aa)). Residues 185 to 205 (VLCWNIFIWMMNYYIIQLIIY) form a helical membrane-spanning segment. Residues 206-224 (NNMIWNKNNMVKMFIMRRK) are Mitochondrial intermembrane-facing. A helical transmembrane segment spans residues 225–242 (LAVINMYMYMKLIIQRTY). Residues 243–517 (SYYMNNTIIY…NNYFKIPPKY (275 aa)) are Mitochondrial matrix-facing.

In the N-terminal section; belongs to the cytochrome b family. The protein in the C-terminal section; belongs to the LAGLIDADG endonuclease family. As to quaternary structure, forms a ribonucleoprotein complex composed of maturase bI3 and 2 dimers of MRS1 that assemble around the bI3 RNA.

Its subcellular location is the mitochondrion inner membrane. Its function is as follows. Mitochondrial mRNA maturase required for splicing of intron 3 of the cytochrome b (COB) gene, containing its own coding sequence. In vivo splicing requires the formation of a ribonucleoprotein complex together with the imported mitochondrial RNA-splicing protein MRS1. The complex seems to stimulate the intrinsic ribozyme activity of intron bI3 through binding to and stabilizing specific secondary and tertiary structure elements in the RNA. In Saccharomyces cerevisiae (strain ATCC 204508 / S288c) (Baker's yeast), this protein is Cytochrome b mRNA maturase bI3 (BI3).